The primary structure comprises 811 residues: MGDDVLGRGSRRDQEIVLVDIVDDDDHDDVPAVRRQDSLYVDATRAGGANHRGGQEESWARTLKLAFQCVGILYGDIGTSPLFVYSSTFKDGVRHPDDLLGALSLIIYSFALFTIVKYVFIALRANDDGDGGTFALYTLISRHAKVSLIPNQQAEDELISKYNTGKPQATLRRARWMKELLETNRAVKIWLFLLTILATAMVISDAVLTPAISVLSAVGGLKEKAPNLTTDEIVWITVATLVVLFAIQRFGTDKIGYLFAPIILLWLLLIGCVGIYNTIKFDTGVLRAFNLKYIIDYFRRNKKDGWISLSGILLCFTGTEALFSDLGYFSIRSIQLSFSFGLVPSVLLAYIGQAAYLREHPEHIANTFYRSTPNVMFWPTFILAVAASIIGSQAMISCAFATISHLQTLNCFPRVKILHTSRQYSGQLYIPEVNFLLCVGACLVTIGFKTTVIIGEAHAICVVFVMIITTLLLTIVMLLVWKVSIWYVALFFIVFMSSESIYLSAVLYQFVHGEYVPVAMSVFLMIVMTVWHYVHVKRYEFELEHTVPRDKVKELLERRDIQRVPGVGLFYTDLVQGIPPVFPHLIEKIPSIHSVLIFVSIKHLPIPSVDRSERFIFRHVDKEEYKVFQCVARYGYRDPMEEAKDFVDALTENLQYYIRDVNFYTTGGDQHIFRSTSYASSIAESFASYEKHSGHAVYAEEMLTPAESFSEHTKQLSGRSKHFKQFQVENMNMQKMEKVQQEQQAILREMENGVVYILGESDIVASPHSSLLNKIIVNYIYSFLRKNCRNGEKMLSIPRSQVLKVGIAYEI.

The Cytoplasmic portion of the chain corresponds to 1-64 (MGDDVLGRGS…QEESWARTLK (64 aa)). The helical transmembrane segment at 65–85 (LAFQCVGILYGDIGTSPLFVY) threads the bilayer. The Extracellular segment spans residues 86 to 102 (SSTFKDGVRHPDDLLGA). A helical membrane pass occupies residues 103 to 123 (LSLIIYSFALFTIVKYVFIAL). Residues 124–188 (RANDDGDGGT…ELLETNRAVK (65 aa)) are Cytoplasmic-facing. A helical membrane pass occupies residues 189–209 (IWLFLLTILATAMVISDAVLT). The Extracellular portion of the chain corresponds to 210–226 (PAISVLSAVGGLKEKAP). The helical transmembrane segment at 227–247 (NLTTDEIVWITVATLVVLFAI) threads the bilayer. Residues 248 to 254 (QRFGTDK) are Cytoplasmic-facing. Residues 255–275 (IGYLFAPIILLWLLLIGCVGI) form a helical membrane-spanning segment. Topologically, residues 276–310 (YNTIKFDTGVLRAFNLKYIIDYFRRNKKDGWISLS) are extracellular. A helical transmembrane segment spans residues 311–331 (GILLCFTGTEALFSDLGYFSI). Over 332–335 (RSIQ) the chain is Cytoplasmic. The chain crosses the membrane as a helical span at residues 336-356 (LSFSFGLVPSVLLAYIGQAAY). The Extracellular segment spans residues 357–375 (LREHPEHIANTFYRSTPNV). The helical transmembrane segment at 376–396 (MFWPTFILAVAASIIGSQAMI) threads the bilayer. Residues 397 to 434 (SCAFATISHLQTLNCFPRVKILHTSRQYSGQLYIPEVN) are Cytoplasmic-facing. A helical transmembrane segment spans residues 435-455 (FLLCVGACLVTIGFKTTVIIG). At 456–459 (EAHA) the chain is on the extracellular side. A helical membrane pass occupies residues 460–480 (ICVVFVMIITTLLLTIVMLLV). Topologically, residues 481 to 482 (WK) are cytoplasmic. A helical membrane pass occupies residues 483-503 (VSIWYVALFFIVFMSSESIYL). Over 504 to 515 (SAVLYQFVHGEY) the chain is Extracellular. A helical transmembrane segment spans residues 516-536 (VPVAMSVFLMIVMTVWHYVHV). Topologically, residues 537 to 811 (KRYEFELEHT…VLKVGIAYEI (275 aa)) are cytoplasmic.

Belongs to the HAK/KUP transporter (TC 2.A.72.3) family.

It is found in the membrane. High-affinity potassium transporter. This is Potassium transporter 27 (HAK27) from Oryza sativa subsp. japonica (Rice).